The following is a 374-amino-acid chain: 4-hydroxy-3-methylbut-2-en-1-yl diphosphate synthase (flavodoxin) (374 aa).

Residues cysteine 268, cysteine 271, cysteine 303, and glutamate 310 each contribute to the [4Fe-4S] cluster site.

The protein belongs to the IspG family. [4Fe-4S] cluster serves as cofactor.

It catalyses the reaction (2E)-4-hydroxy-3-methylbut-2-enyl diphosphate + oxidized [flavodoxin] + H2O + 2 H(+) = 2-C-methyl-D-erythritol 2,4-cyclic diphosphate + reduced [flavodoxin]. The protein operates within isoprenoid biosynthesis; isopentenyl diphosphate biosynthesis via DXP pathway; isopentenyl diphosphate from 1-deoxy-D-xylulose 5-phosphate: step 5/6. Its function is as follows. Converts 2C-methyl-D-erythritol 2,4-cyclodiphosphate (ME-2,4cPP) into 1-hydroxy-2-methyl-2-(E)-butenyl 4-diphosphate. This chain is 4-hydroxy-3-methylbut-2-en-1-yl diphosphate synthase (flavodoxin), found in Geobacillus thermodenitrificans (strain NG80-2).